The primary structure comprises 317 residues: 2-keto-3-deoxygluconate permease 1 (317 aa).

10 consecutive transmembrane segments (helical) span residues 10–30 (VPGGMMVVPLVIGAVINTFAP), 47–67 (AAPLIGAFLLCMGAGISVKAA), 82–102 (LLVAIGIGLGVEHLFGAEGIF), 106–126 (GVAIIAAMSNSNGGLYAALVG), 134–154 (VGAISILSLNDGPFFTMIALG), 159–179 (ANIPIMALVAVLVPLVVGMIL), 195–215 (PLLIPFFAFALGAGINLEMLL), 217–237 (GGLAGILLGVLTTFVGGFFNI), 248–268 (IAGAAASSTAGNAVATPLAIA), and 279–299 (AAAAPLIAASVITTAILTPVL).

It belongs to the KdgT transporter family.

The protein localises to the cell inner membrane. The enzyme catalyses 2-dehydro-3-deoxy-D-gluconate(in) + H(+)(in) = 2-dehydro-3-deoxy-D-gluconate(out) + H(+)(out). Its function is as follows. Catalyzes the proton-dependent uptake of 2-keto-3-deoxygluconate (KDG) into the cell. The sequence is that of 2-keto-3-deoxygluconate permease 1 from Salmonella typhi.